We begin with the raw amino-acid sequence, 453 residues long: Tryptophan biosynthesis protein TrpCF (453 aa).

Residues 1–257 (MQDTTLKKII…TAVRSIIFGD (257 aa)) form an indole-3-glycerol phosphate synthase region. Residues 258 to 453 (NKVCGLTRSI…KSIFQKLRYG (196 aa)) are N-(5'-phosphoribosyl)anthranilate isomerase.

The protein in the N-terminal section; belongs to the TrpC family. It in the C-terminal section; belongs to the TrpF family. In terms of assembly, monomer.

It carries out the reaction N-(5-phospho-beta-D-ribosyl)anthranilate = 1-(2-carboxyphenylamino)-1-deoxy-D-ribulose 5-phosphate. It catalyses the reaction 1-(2-carboxyphenylamino)-1-deoxy-D-ribulose 5-phosphate + H(+) = (1S,2R)-1-C-(indol-3-yl)glycerol 3-phosphate + CO2 + H2O. It functions in the pathway amino-acid biosynthesis; L-tryptophan biosynthesis; L-tryptophan from chorismate: step 3/5. It participates in amino-acid biosynthesis; L-tryptophan biosynthesis; L-tryptophan from chorismate: step 4/5. Functionally, bifunctional enzyme that catalyzes two sequential steps of tryptophan biosynthetic pathway. The first reaction is catalyzed by the isomerase, coded by the TrpF domain; the second reaction is catalyzed by the synthase, coded by the TrpC domain. In Buchnera aphidicola subsp. Acyrthosiphon pisum (strain APS) (Acyrthosiphon pisum symbiotic bacterium), this protein is Tryptophan biosynthesis protein TrpCF (trpC).